Here is a 478-residue protein sequence, read N- to C-terminus: NAD(+) hydrolase ThsA (478 aa).

The Deacetylase sirtuin-type domain occupies 1-287; sequence MDKKVLIKRF…SIRKKYLRKT (287 aa). NAD(+)-binding residues include Ala-19, Asp-110, and His-148. His-148 functions as the Proton acceptor in the catalytic mechanism. An SLOG (STALD) domain region spans residues 288 to 478; the sequence is IFISGSAVDY…VSLINSIQED (191 aa). The 3'cADPR site is built by Gly-292, Ser-293, Leu-330, Arg-373, Lys-390, Gly-401, and Glu-405.

It belongs to the soluble Thoeris ThsA family. As to quaternary structure, homotetramer in solution.

It carries out the reaction NAD(+) + H2O = ADP-D-ribose + nicotinamide + H(+). With respect to regulation, activated by 3'cADPR. Functionally, NAD(+) hydrolyzing component (NADase) of the Thoeris antiviral defense system, composed of ThsA and ThsB (maybe AS248_15445). Activated by 3' cyclic ADP-D-ribose (3'cADPR) but not its isomers 2'cADPR, cADPR and very weakly by ADPR; binds 3'cADPR better than 2'cADPR. Upon activation binds and hydrolyzes NAD(+), leading to cell death and inhibition of phage replication. The polypeptide is NAD(+) hydrolase ThsA (Enterococcus faecium (Streptococcus faecium)).